The chain runs to 423 residues: Maintenance of mitochondrial morphology protein 1 (423 aa).

Topologically, residues 1-20 (MTIPAPIPDKAESSLSFTQG) are lumenal. A helical transmembrane segment spans residues 21–41 (LLLGQLSIVILIGAFIKFFIF). Residues 42–423 (GDPPSPDVTA…PGSMPGLSMT (382 aa)) are Cytoplasmic-facing. The SMP-LTD domain occupies 115–327 (QPESLDWFNV…EPRFQQIELP (213 aa)). 2 disordered regions span residues 332 to 372 (RKKN…KEVE) and 387 to 423 (SLDVPDEGSEDGLRFRRKSKGRDEYAMPGSMPGLSMT). Residues 355 to 372 (RSRDVERDLREEARKEVE) show a composition bias toward basic and acidic residues.

Belongs to the MMM1 family. As to quaternary structure, homodimer. Component of the ER-mitochondria encounter structure (ERMES) or MDM complex, composed of MMM1, MDM10, MDM12 and MDM34. An MMM1 homodimer associates with one molecule of MDM12 on each side in a pairwise head-to-tail manner, and the SMP-LTD domains of MMM1 and MDM12 generate a continuous hydrophobic tunnel for phospholipid trafficking.

It is found in the endoplasmic reticulum membrane. In terms of biological role, component of the ERMES/MDM complex, which serves as a molecular tether to connect the endoplasmic reticulum (ER) and mitochondria. Components of this complex are involved in the control of mitochondrial shape and protein biogenesis, and function in nonvesicular lipid trafficking between the ER and mitochondria. The MDM12-MMM1 subcomplex functions in the major beta-barrel assembly pathway that is responsible for biogenesis of all outer membrane beta-barrel proteins, and acts in a late step after the SAM complex. The MDM10-MDM12-MMM1 subcomplex further acts in the TOM40-specific pathway after the action of the MDM12-MMM1 complex. Essential for establishing and maintaining the structure of mitochondria and maintenance of mtDNA nucleoids. The chain is Maintenance of mitochondrial morphology protein 1 from Botryotinia fuckeliana (strain B05.10) (Noble rot fungus).